The sequence spans 178 residues: Ribosome rescue factor SmrB (178 aa).

One can recognise a Smr domain in the interval 99-174 (LDLHGLTQMQ…GNAALLILIE (76 aa)).

It belongs to the SmrB family. In terms of assembly, associates with collided ribosomes, but not with correctly translating polysomes.

Acts as a ribosome collision sensor. Detects stalled/collided disomes (pairs of ribosomes where the leading ribosome is stalled and a second ribosome has collided with it) and endonucleolytically cleaves mRNA at the 5' boundary of the stalled ribosome. Stalled/collided disomes form a new interface (primarily via the 30S subunits) that binds SmrB. Cleaved mRNA becomes available for tmRNA ligation, leading to ribosomal subunit dissociation and rescue of stalled ribosomes. This chain is Ribosome rescue factor SmrB, found in Photorhabdus laumondii subsp. laumondii (strain DSM 15139 / CIP 105565 / TT01) (Photorhabdus luminescens subsp. laumondii).